We begin with the raw amino-acid sequence, 263 residues long: Small ribosomal subunit protein eS4 (263 aa).

In terms of domain architecture, S4 RNA-binding spans Leu-42 to Asp-104.

The protein belongs to the eukaryotic ribosomal protein eS4 family.

This Gallus gallus (Chicken) protein is Small ribosomal subunit protein eS4 (RPS4).